The chain runs to 523 residues: GMP synthase [glutamine-hydrolyzing] (523 aa).

The region spanning 8-205 (KILILDFGSQ…VVNICGCATN (198 aa)) is the Glutamine amidotransferase type-1 domain. Residue C85 is the Nucleophile of the active site. Catalysis depends on residues H179 and E181. The GMPS ATP-PPase domain maps to 206 to 398 (WTPENIIEDA…LGLPAEMLNR (193 aa)). 233–239 (SGGVDSS) is an ATP binding site.

In terms of assembly, homodimer.

The enzyme catalyses XMP + L-glutamine + ATP + H2O = GMP + L-glutamate + AMP + diphosphate + 2 H(+). Its pathway is purine metabolism; GMP biosynthesis; GMP from XMP (L-Gln route): step 1/1. Functionally, catalyzes the synthesis of GMP from XMP. The chain is GMP synthase [glutamine-hydrolyzing] from Actinobacillus succinogenes (strain ATCC 55618 / DSM 22257 / CCUG 43843 / 130Z).